We begin with the raw amino-acid sequence, 289 residues long: 4-diphosphocytidyl-2-C-methyl-D-erythritol kinase (289 aa).

Lys10 is an active-site residue. Residue 94–104 (PVAAGLAGGSS) participates in ATP binding. Asp136 is an active-site residue.

The protein belongs to the GHMP kinase family. IspE subfamily.

It carries out the reaction 4-CDP-2-C-methyl-D-erythritol + ATP = 4-CDP-2-C-methyl-D-erythritol 2-phosphate + ADP + H(+). It participates in isoprenoid biosynthesis; isopentenyl diphosphate biosynthesis via DXP pathway; isopentenyl diphosphate from 1-deoxy-D-xylulose 5-phosphate: step 3/6. Functionally, catalyzes the phosphorylation of the position 2 hydroxy group of 4-diphosphocytidyl-2C-methyl-D-erythritol. This Bacillus licheniformis (strain ATCC 14580 / DSM 13 / JCM 2505 / CCUG 7422 / NBRC 12200 / NCIMB 9375 / NCTC 10341 / NRRL NRS-1264 / Gibson 46) protein is 4-diphosphocytidyl-2-C-methyl-D-erythritol kinase.